The chain runs to 300 residues: MEPPVPQSSVPVNPSSVMVQPLLDSRAPHSRLQHPLTILPIDQMKTSHVENDYIDNPSLAPATGPKRPRGGPPELAPTPARCDQDITHHWISFSGRPSSVSSSSSTSSDQRLLDHMAPPPVAEQASPRAVRLQPKVVHCKPLDLKGPTAPPELDKHFLLCEACGKCKCKECASPRTLPSCWVCNQECLCSAQTLVNYGTCMCLVQGIFYHCTNEDDEGSCADHPCSCSGSNCCARWSFMGALSVVLPCLLCYLPATGCVKLAQRGYDRLRRPGCRCKHTNSVICKAASGDTKTSRSDKPF.

Position 1 is an N-acetylmethionine (methionine 1). 2 disordered regions span residues 1 to 28 (MEPP…SRAP) and 52 to 114 (DYID…RLLD). Composition is skewed to low complexity over residues 7–21 (QSSV…MVQP) and 92–108 (SFSG…STSS). Serine 126 carries the phosphoserine modification. Residues 167–274 (KCKECASPRT…GYDRLRRPGC (108 aa)) form the SPR domain.

It belongs to the sprouty family. As to quaternary structure, interacts (via C-terminus) with TESK1 (via both C- and N-termini); the interaction inhibits TESK1 kinase activity. Interacts with RAF1. Interacts with CAV1 (via C-terminus). Expressed in the embryo and adult tissues including heart, brain, lung, kidney, and skeletal muscle.

It is found in the cytoplasm. The protein resides in the cell projection. The protein localises to the ruffle membrane. Functionally, suppresses the insulin receptor and EGFR-transduced MAPK signaling pathway, but does not inhibit MAPK activation by a constitutively active mutant Ras. Probably impairs the formation of GTP-Ras. Inhibits Ras-independent, but not Ras-dependent, activation of RAF1. Represses integrin-mediated cell spreading via inhibition of TESK1-mediated phosphorylation of cofilin. In Mus musculus (Mouse), this protein is Protein sprouty homolog 4 (Spry4).